The chain runs to 72 residues: Cytochrome b-c1 complex subunit 8-1, mitochondrial (72 aa).

Residues 1 to 41 are Mitochondrial matrix-facing; that stretch reads MGKQPVKLKAVVYALSPFQQKIMTGLWKDLPEKIHHKVSEN. The chain crosses the membrane as a helical span at residues 42–58; it reads WISATLLVTPVVGTYWY. The Mitochondrial intermembrane portion of the chain corresponds to 59 to 72; it reads AQYFKEQEKLEHRF.

This sequence belongs to the UQCRQ/QCR8 family. Component of the ubiquinol-cytochrome c oxidoreductase (cytochrome b-c1 complex, complex III, CIII), a multisubunit enzyme composed of 10 subunits. The complex is composed of 3 respiratory subunits cytochrome b (MT-CYB), cytochrome c1 (CYC1-1 or CYC1-2) and Rieske protein (UCR1-1 or UCR1-2), 2 core protein subunits MPPalpha1 (or MPPalpha2) and MPPB, and 5 low-molecular weight protein subunits QCR7-1 (or QCR7-2), UCRQ-1 (or UCRQ-2), QCR9, UCRY and probably QCR6-1 (or QCR6-2). The complex exists as an obligatory dimer and forms supercomplexes (SCs) in the inner mitochondrial membrane with NADH-ubiquinone oxidoreductase (complex I, CI), resulting in different assemblies (supercomplexes SCI(1)III(2) and SCI(2)III(4)).

It is found in the mitochondrion inner membrane. Its function is as follows. Component of the ubiquinol-cytochrome c oxidoreductase, a multisubunit transmembrane complex that is part of the mitochondrial electron transport chain which drives oxidative phosphorylation. The respiratory chain contains 3 multisubunit complexes succinate dehydrogenase (complex II, CII), ubiquinol-cytochrome c oxidoreductase (cytochrome b-c1 complex, complex III, CIII) and cytochrome c oxidase (complex IV, CIV), that cooperate to transfer electrons derived from NADH and succinate to molecular oxygen, creating an electrochemical gradient over the inner membrane that drives transmembrane transport and the ATP synthase. The cytochrome b-c1 complex catalyzes electron transfer from ubiquinol to cytochrome c, linking this redox reaction to translocation of protons across the mitochondrial inner membrane, with protons being carried across the membrane as hydrogens on the quinol. In the process called Q cycle, 2 protons are consumed from the matrix, 4 protons are released into the intermembrane space and 2 electrons are passed to cytochrome c. The chain is Cytochrome b-c1 complex subunit 8-1, mitochondrial (UCRQ-1) from Arabidopsis thaliana (Mouse-ear cress).